Consider the following 647-residue polypeptide: UvrABC system protein C (647 aa).

The GIY-YIG domain occupies 16–95 (VEPGVYRFRD…IKEFDPRFNV (80 aa)). The region spanning 208–243 (DRFARELEQQMNAAAAELDFERAARLRDDLGALKRA) is the UVR domain.

The protein belongs to the UvrC family. As to quaternary structure, interacts with UvrB in an incision complex.

It is found in the cytoplasm. The UvrABC repair system catalyzes the recognition and processing of DNA lesions. UvrC both incises the 5' and 3' sides of the lesion. The N-terminal half is responsible for the 3' incision and the C-terminal half is responsible for the 5' incision. The protein is UvrABC system protein C of Mycolicibacterium paratuberculosis (strain ATCC BAA-968 / K-10) (Mycobacterium paratuberculosis).